The chain runs to 122 residues: Large ribosomal subunit protein uL14 (122 aa).

The protein belongs to the universal ribosomal protein uL14 family. In terms of assembly, part of the 50S ribosomal subunit. Forms a cluster with proteins L3 and L19. In the 70S ribosome, L14 and L19 interact and together make contacts with the 16S rRNA in bridges B5 and B8.

Functionally, binds to 23S rRNA. Forms part of two intersubunit bridges in the 70S ribosome. The polypeptide is Large ribosomal subunit protein uL14 (Pseudomonas aeruginosa (strain LESB58)).